Here is a 773-residue protein sequence, read N- to C-terminus: DEAD-box ATP-dependent RNA helicase 32 (773 aa).

Positions 28–71 (IDAGKPARGTRPPPLSKSSSSPADTAAAKRGAKGAGGVPSKAAG) are disordered. Over residues 43 to 56 (SKSSSSPADTAAAK) the composition is skewed to low complexity. The Q motif signature appears at 80 to 108 (ARFDELPLSNKTKDGLRKAGYTEMSEIQR). A Helicase ATP-binding domain is found at 111-287 (LPHALCGRDV…RVSLKDPEYI (177 aa)). 124–131 (AKTGSGKT) is an ATP binding site. The short motif at 235 to 238 (DEAD) is the DEAD box element. The Helicase C-terminal domain occupies 309-462 (PLEQKLNMLW…IKKPNTEQLQ (154 aa)). A coiled-coil region spans residues 664 to 715 (DKDKISQRYAEMLREMQEHDKEDKLEHKRILREKKLQKKLKLKRKRNEEMDA). The segment covering 699 to 708 (LQKKLKLKRK) has biased composition (basic residues). Residues 699–755 (LQKKLKLKRKRNEEMDAGSENSGSESDRDQRTASKGKKRYFNSDDEEGSKDAAKDGD) form a disordered region.

Belongs to the DEAD box helicase family. DDX10/DBP4 subfamily.

It carries out the reaction ATP + H2O = ADP + phosphate + H(+). The sequence is that of DEAD-box ATP-dependent RNA helicase 32 from Oryza sativa subsp. japonica (Rice).